The sequence spans 320 residues: Malate dehydrogenase (320 aa).

Residues 10–15 (GAGQIG) and Asp34 contribute to the NAD(+) site. Residues Arg83 and Arg89 each coordinate substrate. NAD(+) is bound by residues Asn96 and 119–121 (ITN). 2 residues coordinate substrate: Asn121 and Arg152. His176 serves as the catalytic Proton acceptor.

The protein belongs to the LDH/MDH superfamily. MDH type 3 family.

It catalyses the reaction (S)-malate + NAD(+) = oxaloacetate + NADH + H(+). In terms of biological role, catalyzes the reversible oxidation of malate to oxaloacetate. This chain is Malate dehydrogenase, found in Roseobacter denitrificans (strain ATCC 33942 / OCh 114) (Erythrobacter sp. (strain OCh 114)).